A 416-amino-acid polypeptide reads, in one-letter code: MSGHRSTRKRCGDSHPESPVGFGHMSTTGCVLNKLFQLPTPPLSRHQLKRLEEHRYQSAGRSLLEPLMQGYWEWLVGRVPSWIAPNLITIIGLSINICTTILLVFYCPTATEQAPLWAYIACACGLFIYQSLDAIDGKQARRTNSSSPLGELFDHGCDSLSTVFVVLGTCIAVQLGTNPDWMFFCCFAGTFMFYCAHWQTYVSGTLRFGIIDVTEVQIFIIIMHLLAVIGGPPFWQSMIPVLNIQMKLLPALCTVAGTIFSCTNYFRVIFTGGVGKNGSTIAGTSVLSPFLHIGSVITLAVMIYKKSAVQLFEKHPCLYILTFGFVSAKITNKLVVAHMTKSEMHLHDTAFIGPALLFLDQYFNSFIDEYIVLWIALIFSFFDLIRYCVSVCNQIASHLHIHVFRIKASTAHSNHH.

The disordered stretch occupies residues 1–20 (MSGHRSTRKRCGDSHPESPV). Ser-18 bears the Phosphoserine mark. Thr-40 is modified (phosphothreonine). Asn-86 contributes to the CDP-choline binding site. The next 2 helical transmembrane spans lie at 89–108 (TIIG…FYCP) and 116–133 (LWAY…QSLD). Mg(2+) is bound at residue Asp-133. Residue Asn-144 is glycosylated (N-linked (GlcNAc...) asparagine). A CDP-choline-binding site is contributed by Glu-151. Position 154 (Asp-154) interacts with Mg(2+). Catalysis depends on His-155, which acts as the Proton acceptor. Helical transmembrane passes span 156 to 176 (GCDS…VQLG), 180 to 199 (DWMF…AHWQ), 210 to 230 (IIDV…AVIG), 246 to 267 (MKLL…NYFR), 286 to 306 (VLSP…IYKK), 315 to 334 (HPCL…TNKL), 349 to 363 (TAFI…DQYF), and 368 to 388 (DEYI…IRYC). A Mg(2+)-binding site is contributed by Asp-158.

This sequence belongs to the CDP-alcohol phosphatidyltransferase class-I family. In terms of assembly, homodimer. The cofactor is Mg(2+). Mn(2+) is required as a cofactor.

The protein localises to the endoplasmic reticulum membrane. Its subcellular location is the nucleus membrane. It catalyses the reaction CDP-ethanolamine + a 1,2-diacyl-sn-glycerol = a 1,2-diacyl-sn-glycero-3-phosphoethanolamine + CMP + H(+). The enzyme catalyses CDP-choline + a 1,2-diacyl-sn-glycerol = a 1,2-diacyl-sn-glycero-3-phosphocholine + CMP + H(+). The catalysed reaction is 1-O-alkyl-2-acyl-sn-glycerol + CDP-choline = a 1-O-alkyl-2-acyl-sn-glycero-3-phosphocholine + CMP + H(+). It carries out the reaction a 1-O-(1Z-alkenyl)-2-acyl-sn-glycerol + CDP-choline = a 1-O-(1Z-alkenyl)-2-acyl-sn-glycero-3-phosphocholine + CMP + H(+). It catalyses the reaction 1,2-dioctanoyl-sn-glycerol + CDP-choline = 1,2-dioctanoyl-sn-glycero-3-phosphocholine + CMP + H(+). The enzyme catalyses 1,2-didecanoyl-sn-glycerol + CDP-choline = 1,2-didecanoyl-sn-glycero-3-phosphocholine + CMP + H(+). The catalysed reaction is CDP-choline + 1,2-di-(9Z-octadecenoyl)-sn-glycerol = 1,2-di-(9Z-octadecenoyl)-sn-glycero-3-phosphocholine + CMP + H(+). It carries out the reaction 1-hexadecanoyl-2-(9Z-octadecenoyl)-sn-glycerol + CDP-choline = 1-hexadecanoyl-2-(9Z-octadecenoyl)-sn-glycero-3-phosphocholine + CMP + H(+). It catalyses the reaction CDP-ethanolamine + 1,2-di-(9Z-octadecenoyl)-sn-glycerol = 1,2-di-(9Z-octadecenoyl)-sn-glycero-3-phosphoethanolamine + CMP + H(+). The enzyme catalyses 1-hexadecanoyl-2-(9Z-octadecenoyl)-sn-glycerol + CDP-ethanolamine = 1-hexadecanoyl-2-(9Z-octadecenoyl)-sn-glycero-3-phosphoethanolamine + CMP + H(+). The catalysed reaction is 1-hexadecanoyl-2-(4Z,7Z,10Z,13Z,16Z,19Z-docosahexaenoyl)-sn-glycerol + CDP-choline = 1-hexadecanoyl-2-(4Z,7Z,10Z,13Z,16Z,19Z-docosahexaenoyl)-sn-glycero-3-phosphocholine + CMP + H(+). It carries out the reaction 1,2-di-(9Z-hexadecenoyl)-sn-glycerol + CDP-choline = 1,2-di-(9Z-hexadecenoyl)-sn-glycero-3-phosphocholine + CMP + H(+). It catalyses the reaction 1,2-di-(9Z-hexadecenoyl)-sn-glycerol + CDP-ethanolamine = 1,2-di-(9Z-hexadecenoyl)-sn-glycero-3-phosphoethanolamine + CMP + H(+). The enzyme catalyses 1-O-hexadecyl-2-acetyl-sn-glycerol + CDP-choline = 1-O-hexadecyl-2-acetyl-sn-glycero-3-phosphocholine + CMP + H(+). The catalysed reaction is 1-O-hexadecyl-2-(5Z,8Z,11Z,14Z-eicosatetraenoyl)-sn-glycerol + CDP-choline = 1-O-hexadecyl-2-(5Z,8Z,11Z,14Z)-eicosatetraenoyl-sn-glycero-3-phosphocholine + CMP + H(+). The protein operates within phospholipid metabolism; phosphatidylethanolamine biosynthesis; phosphatidylethanolamine from ethanolamine: step 3/3. Its pathway is phospholipid metabolism; phosphatidylcholine biosynthesis; phosphatidylcholine from phosphocholine: step 2/2. Its function is as follows. Catalyzes both phosphatidylcholine and phosphatidylethanolamine biosynthesis from CDP-choline and CDP-ethanolamine, respectively. Involved in protein-dependent process of phospholipid transport to distribute phosphatidyl choline to the lumenal surface. Has a higher cholinephosphotransferase activity than ethanolaminephosphotransferase activity. This Mus musculus (Mouse) protein is Choline/ethanolaminephosphotransferase 1.